A 1171-amino-acid chain; its full sequence is Kinesin-like protein GA13060 (1171 aa).

Positions 1-24 (MASSISRNGGFCGALQRAPPPMPP) are disordered. Residues 40–400 (KVKVMLRVSD…IQIASRIHRL (361 aa)) enclose the Kinesin motor domain. Disordered regions lie at residues 737-774 (LLGQDMSLPPDGDEDQDSGPSEVPPALPLFDDPLGSRD), 798-820 (LVASRASSSHHQHQHHRPSSQRS), 932-955 (PAYRLTPSPPKQPSHSPSQGSLPS), 1043-1099 (TSSE…QRHR), and 1124-1143 (RHSHGVGGHKKHRHRHEGNG). Residues 805–816 (SSHHQHQHHRPS) are compositionally biased toward basic residues. The span at 1043-1059 (TSSEAYDSGHDSNSTPR) shows a compositional bias: polar residues. Residues 1124–1139 (RHSHGVGGHKKHRHRH) show a composition bias toward basic residues.

This sequence belongs to the TRAFAC class myosin-kinesin ATPase superfamily. Kinesin family. KIF26 subfamily.

The protein resides in the cytoplasm. The protein localises to the cytoskeleton. In Drosophila pseudoobscura pseudoobscura (Fruit fly), this protein is Kinesin-like protein GA13060.